Here is a 408-residue protein sequence, read N- to C-terminus: MKNQLIDRLTRYTTIDTQSDPKSTTTPSTEKQWDLLHLLERELQQLGLPTDLDENGYLFATLESNIDADVPTVGFLAHVDTSPDFNASNVKPQIIENYDSKPYKLGNTKRVLDPKVFPELNSLVGHTLMVTDGTSLLGADDKAGIVEIMEAICYLQEHPEIKHGTIRIGFTPDEEIGRGPHKFDVDRFNADFAYTMDGSQYGELQYESFNAAEAVITCHGVNVHPGSAKNAMVNAIRLGEQFDSLLPDSEVPERTEGYEGFYHLMNFEGTVEKATLQYIIRDHDKKQFELRKKRILEIRDDINAHFENYPVKVDISDQYFNMAEKILPLPHIIDIPKRVFAKLDIPANTEPIRGGTDGSQLSFMGLPTPNIFTGCGNFHGPYEYASIDVMEKAVQVIIGIVEDIAENN.

Zn(2+) is bound at residue histidine 78. Aspartate 80 is an active-site residue. Aspartate 140 contributes to the Zn(2+) binding site. Glutamate 174 serves as the catalytic Proton acceptor. Positions 175, 197, and 379 each coordinate Zn(2+).

It belongs to the peptidase M20B family. Zn(2+) serves as cofactor.

The protein resides in the cytoplasm. It carries out the reaction Release of the N-terminal residue from a tripeptide.. Functionally, cleaves the N-terminal amino acid of tripeptides. This Staphylococcus aureus (strain bovine RF122 / ET3-1) protein is Peptidase T.